A 193-amino-acid chain; its full sequence is DNA damage-inducible transcript 4-like protein (193 aa).

Belongs to the DDIT4 family.

The protein localises to the cytoplasm. Inhibits cell growth by regulating the TOR signaling pathway upstream of the TSC1-TSC2 complex and downstream of AKT1. The chain is DNA damage-inducible transcript 4-like protein (Ddit4l) from Mus musculus (Mouse).